The primary structure comprises 311 residues: Protoheme IX farnesyltransferase (311 aa).

Transmembrane regions (helical) follow at residues V30–P50, W55–F75, F108–T128, M129–P149, Q153–M173, W182–Y202, F233–L253, and I287–L307.

This sequence belongs to the UbiA prenyltransferase family. Protoheme IX farnesyltransferase subfamily.

It localises to the cell inner membrane. The catalysed reaction is heme b + (2E,6E)-farnesyl diphosphate + H2O = Fe(II)-heme o + diphosphate. It participates in porphyrin-containing compound metabolism; heme O biosynthesis; heme O from protoheme: step 1/1. In terms of biological role, converts heme B (protoheme IX) to heme O by substitution of the vinyl group on carbon 2 of heme B porphyrin ring with a hydroxyethyl farnesyl side group. This Methylibium petroleiphilum (strain ATCC BAA-1232 / LMG 22953 / PM1) protein is Protoheme IX farnesyltransferase.